The chain runs to 862 residues: Transcription factor E2F7 (862 aa).

DNA-binding regions lie at residues 140-209 and 279-364; these read RKQK…CWHG and RKDK…KWIG. Disordered stretches follow at residues 561-592, 617-643, and 788-862; these read PGSD…DAPL, TPEQ…NVGE, and KADS…SAGN. Over residues 564 to 574 the composition is skewed to polar residues; sequence DSPTLEETTMS. Over residues 575–590 the composition is skewed to basic and acidic residues; that stretch reads KQERPTKRQLNDKDDA. Composition is skewed to polar residues over residues 633 to 643 and 832 to 851; these read EPVTKHSNVGE and DVSS…SSAQ.

The protein belongs to the E2F/DP family. Homodimer and heterodimer: mainly forms homodimers and, to a lesser extent, heterodimers with e2f8.

It is found in the nucleus. In terms of biological role, atypical E2F transcription factor that participates in various processes such as angiogenesis and polyploidization of specialized cells. Mainly acts as a transcription repressor that binds DNA independently of DP proteins and specifically recognizes the E2 recognition site 5'-TTTC[CG]CGC-3'. Directly represses transcription of classical E2F transcription factors such as e2f1. Acts as a regulator of S-phase by recognizing and binding the E2-related site 5'-TTCCCGCC-3' and mediating repression of G1/S-regulated genes. Acts as a promoter of sprouting angiogenesis, possibly by acting as a transcription activator. The chain is Transcription factor E2F7 (e2f7) from Xenopus tropicalis (Western clawed frog).